A 219-amino-acid chain; its full sequence is ATP phosphoribosyltransferase (219 aa).

It belongs to the ATP phosphoribosyltransferase family. Short subfamily. As to quaternary structure, heteromultimer composed of HisG and HisZ subunits.

It is found in the cytoplasm. It catalyses the reaction 1-(5-phospho-beta-D-ribosyl)-ATP + diphosphate = 5-phospho-alpha-D-ribose 1-diphosphate + ATP. It participates in amino-acid biosynthesis; L-histidine biosynthesis; L-histidine from 5-phospho-alpha-D-ribose 1-diphosphate: step 1/9. Its function is as follows. Catalyzes the condensation of ATP and 5-phosphoribose 1-diphosphate to form N'-(5'-phosphoribosyl)-ATP (PR-ATP). Has a crucial role in the pathway because the rate of histidine biosynthesis seems to be controlled primarily by regulation of HisG enzymatic activity. The chain is ATP phosphoribosyltransferase from Paramagnetospirillum magneticum (strain ATCC 700264 / AMB-1) (Magnetospirillum magneticum).